The following is a 229-amino-acid chain: Cell division protein FtsQ (229 aa).

A helical transmembrane segment spans residues 1–21 (MIVLLCVIFAFLVYSNWHSWL). Topologically, residues 22-229 (ESLDRNPIRA…AAVGFSPLPK (208 aa)) are periplasmic. Residues 27–97 (NPIRAYALTH…DRLSITLIEH (71 aa)) form the POTRA domain.

The protein belongs to the FtsQ/DivIB family. FtsQ subfamily. In terms of assembly, part of a complex composed of FtsB, FtsL and FtsQ.

Its subcellular location is the cell inner membrane. In terms of biological role, essential cell division protein. May link together the upstream cell division proteins, which are predominantly cytoplasmic, with the downstream cell division proteins, which are predominantly periplasmic. May control correct divisome assembly. The chain is Cell division protein FtsQ from Actinobacillus pleuropneumoniae serotype 3 (strain JL03).